The following is a 95-amino-acid chain: Secreted RxLR effector protein 20 (95 aa).

An N-terminal signal peptide occupies residues 1 to 20 (MQSPYIILFALVTLLGSISG). Positions 47–50 (RLLR) match the RxLR motif.

Belongs to the RxLR effector family.

The protein resides in the secreted. Its subcellular location is the host nucleus. It is found in the host cytoplasm. Secreted effector that partially suppresses the host cell death induced by cell death-inducing proteins. This is Secreted RxLR effector protein 20 from Plasmopara viticola (Downy mildew of grapevine).